The following is a 261-amino-acid chain: Enolase-phosphatase E1 (261 aa).

The Mg(2+) site is built by aspartate 16 and glutamate 18. Substrate contacts are provided by residues 153–154 (SS) and lysine 187. Aspartate 212 is a binding site for Mg(2+).

It belongs to the HAD-like hydrolase superfamily. MasA/MtnC family. As to quaternary structure, monomer. Mg(2+) is required as a cofactor.

The protein localises to the cytoplasm. It localises to the nucleus. It carries out the reaction 5-methylsulfanyl-2,3-dioxopentyl phosphate + H2O = 1,2-dihydroxy-5-(methylsulfanyl)pent-1-en-3-one + phosphate. It participates in amino-acid biosynthesis; L-methionine biosynthesis via salvage pathway; L-methionine from S-methyl-5-thio-alpha-D-ribose 1-phosphate: step 3/6. It functions in the pathway amino-acid biosynthesis; L-methionine biosynthesis via salvage pathway; L-methionine from S-methyl-5-thio-alpha-D-ribose 1-phosphate: step 4/6. Functionally, bifunctional enzyme that catalyzes the enolization of 2,3-diketo-5-methylthiopentyl-1-phosphate (DK-MTP-1-P) into the intermediate 2-hydroxy-3-keto-5-methylthiopentenyl-1-phosphate (HK-MTPenyl-1-P), which is then dephosphorylated to form the acireductone 1,2-dihydroxy-3-keto-5-methylthiopentene (DHK-MTPene). In Homo sapiens (Human), this protein is Enolase-phosphatase E1.